Consider the following 702-residue polypeptide: Cytolytic toxin-alpha (702 aa).

Positions 2 to 265 are structural MACPF/CDC pore-forming domain; the sequence is SSDIIMAGLG…KADLLVRDIS (264 aa). N-linked (GlcNAc...) asparagine glycans are attached at residues asparagine 93, asparagine 100, asparagine 201, asparagine 287, and asparagine 311. The segment at 266–385 is structural FAT domain; that stretch reads QGLVRKVHSI…DIIEETKHKA (120 aa). The interval 386-513 is thioredoxin (THX) domain; the sequence is VLSQSQMVKD…PIISAVEKIV (128 aa). A B30.2/SPRY domain is found at 505-702; sequence IISAVEKIVD…RPYHGTVRLL (198 aa). Asparagine 530 is a glycosylation site (N-linked (GlcNAc...) asparagine).

This sequence belongs to the SNTX/VTX toxin family. In terms of assembly, heterodimer of alpha and beta subunits; non-covalently linked. Also associates into tetramers or even higher aggregates. In terms of processing, intrachain disulfide bonds may be present in the heterodimer. In terms of tissue distribution, expressed by the venom gland.

The protein localises to the secreted. Its function is as follows. This heterodimer induces potent hemolytic activities (when tested on rabbit erythrocytes, EC(50)=25-56 ng/mL) due to its ability to form pores in the cell membrane. The pore may be composed of 10 alpha/beta heterodimers. The toxin shows cardiovascular effects that include a vasorelaxant action that may involve the L-arginine-nitric oxid synthase pathway. In addition, it displays edema-inducing activities, increases vascular permeability. It also shows myotoxic activities and interferes irreversibly with neuromuscular function. It also induces irreversible platelet aggregation in rabbit or rat (but not in human or mouse) whole blood. In addition, it has been observed to increase spontaneous quantal acetylcholine release from isolated frog cutaneous pectoris motor endings. The sequence is that of Cytolytic toxin-alpha from Scorpaena plumieri (Spotted scorpionfish).